Reading from the N-terminus, the 148-residue chain is Gastrin-releasing peptide (148 aa).

The N-terminal stretch at 1–23 (MRGRELPLVLLALVLCLAPRGRA) is a signal peptide. Methionine 50 carries the post-translational modification Methionine amide. Residues 54–148 (STGESSSVSE…EGRNPQLNQQ (95 aa)) constitute a propeptide that is removed on maturation. The tract at residues 89 to 148 (EAKENRNHQPPQPKALGNQQPSWDSEDSSNFKDVGSKGKVGRLSAPGSQREGRNPQLNQQ) is disordered.

This sequence belongs to the bombesin/neuromedin-B/ranatensin family.

The protein resides in the secreted. The protein localises to the cytoplasmic vesicle. Its subcellular location is the secretory vesicle lumen. It localises to the cell projection. It is found in the neuron projection. Functionally, stimulates the release of gastrin and other gastrointestinal hormones. Contributes to the perception of prurient stimuli and to the transmission of itch signals in the spinal cord that promote scratching behavior. Contributes primarily to nonhistaminergic itch sensation. In one study, shown to act in the amygdala as part of an inhibitory network which inhibits memory specifically related to learned fear. In another study, shown to act on vasoactive intestinal peptide (VIP)-expressing cells in the auditory cortex, most likely via extrasynaptic diffusion from local and long-range sources, to mediate disinhibition of glutamatergic cells via VIP cell-specific GRPR signaling which leads to enhanced auditory fear memories. Contributes to the regulation of food intake. Inhibits voltage-gated sodium channels but enhances voltage-gated potassium channels in hippocampal neurons. Induces sighing by acting directly on the pre-Botzinger complex, a cluster of several thousand neurons in the ventrolateral medulla responsible for inspiration during respiratory activity. Its function is as follows. Induces an itch response through activation of receptors present on mast cells, triggering mast cell degranulation. The chain is Gastrin-releasing peptide (GRP) from Homo sapiens (Human).